A 181-amino-acid chain; its full sequence is Endoribonuclease YbeY (181 aa).

Zn(2+)-binding residues include His140, His144, and His150.

This sequence belongs to the endoribonuclease YbeY family. Requires Zn(2+) as cofactor.

The protein resides in the cytoplasm. Single strand-specific metallo-endoribonuclease involved in late-stage 70S ribosome quality control and in maturation of the 3' terminus of the 16S rRNA. The polypeptide is Endoribonuclease YbeY (Dinoroseobacter shibae (strain DSM 16493 / NCIMB 14021 / DFL 12)).